The following is a 588-amino-acid chain: Adenine deaminase (588 aa).

The protein belongs to the metallo-dependent hydrolases superfamily. Adenine deaminase family. Homodimer. Mn(2+) serves as cofactor.

It catalyses the reaction adenine + H2O + H(+) = hypoxanthine + NH4(+). This Shigella sonnei (strain Ss046) protein is Adenine deaminase.